Consider the following 232-residue polypeptide: 7-cyano-7-deazaguanine synthase (232 aa).

8–18 provides a ligand contact to ATP; it reads FSGGQDSTTCL. Zn(2+) contacts are provided by cysteine 189, cysteine 198, cysteine 201, and cysteine 204.

It belongs to the QueC family. The cofactor is Zn(2+).

It carries out the reaction 7-carboxy-7-deazaguanine + NH4(+) + ATP = 7-cyano-7-deazaguanine + ADP + phosphate + H2O + H(+). It functions in the pathway purine metabolism; 7-cyano-7-deazaguanine biosynthesis. Functionally, catalyzes the ATP-dependent conversion of 7-carboxy-7-deazaguanine (CDG) to 7-cyano-7-deazaguanine (preQ(0)). This Yersinia enterocolitica serotype O:8 / biotype 1B (strain NCTC 13174 / 8081) protein is 7-cyano-7-deazaguanine synthase.